Consider the following 246-residue polypeptide: Probable phosphatase Ssed_2939 (246 aa).

Zn(2+)-binding residues include His-8, His-10, His-16, His-41, Glu-74, His-102, His-132, Asp-193, and His-195.

This sequence belongs to the PHP family. Requires Zn(2+) as cofactor.

This chain is Probable phosphatase Ssed_2939, found in Shewanella sediminis (strain HAW-EB3).